A 157-amino-acid chain; its full sequence is Mediator of RNA polymerase II transcription subunit 22 (157 aa).

It belongs to the Mediator complex subunit 22 family. Component of the Mediator complex.

The protein resides in the nucleus. In terms of biological role, component of the Mediator complex, a coactivator involved in the regulated transcription of nearly all RNA polymerase II-dependent genes. Mediator functions as a bridge to convey information from gene-specific regulatory proteins to the basal RNA polymerase II transcription machinery. Mediator is recruited to promoters by direct interactions with regulatory proteins and serves as a scaffold for the assembly of a functional preinitiation complex with RNA polymerase II and the general transcription factors. The chain is Mediator of RNA polymerase II transcription subunit 22 (mdt-22) from Caenorhabditis elegans.